Reading from the N-terminus, the 145-residue chain is LIM domain only protein 3 (145 aa).

LIM zinc-binding domains are found at residues 11-73 (KGCA…LFGT) and 75-137 (GNCA…GLMK).

The protein is LIM domain only protein 3 (Lmo3) of Rattus norvegicus (Rat).